The following is a 183-amino-acid chain: NADH-quinone oxidoreductase subunit B (183 aa).

[4Fe-4S] cluster is bound by residues cysteine 60, cysteine 61, cysteine 125, and cysteine 154.

This sequence belongs to the complex I 20 kDa subunit family. In terms of assembly, NDH-1 is composed of 14 different subunits. Subunits NuoB, C, D, E, F, and G constitute the peripheral sector of the complex. Requires [4Fe-4S] cluster as cofactor.

It is found in the cell inner membrane. The catalysed reaction is a quinone + NADH + 5 H(+)(in) = a quinol + NAD(+) + 4 H(+)(out). Its function is as follows. NDH-1 shuttles electrons from NADH, via FMN and iron-sulfur (Fe-S) centers, to quinones in the respiratory chain. The immediate electron acceptor for the enzyme in this species is believed to be ubiquinone. Couples the redox reaction to proton translocation (for every two electrons transferred, four hydrogen ions are translocated across the cytoplasmic membrane), and thus conserves the redox energy in a proton gradient. The polypeptide is NADH-quinone oxidoreductase subunit B (Desulfovibrio desulfuricans (strain ATCC 27774 / DSM 6949 / MB)).